A 221-amino-acid chain; its full sequence is Adenylate kinase (221 aa).

10 to 15 (GAGKGT) lines the ATP pocket. An NMP region spans residues 30 to 59 (STGDMLRAAVKAGTPLGVEAKKVMDAGGLV). AMP is bound by residues Thr-31, Arg-36, 57-59 (GLV), 85-88 (GFPR), and Gln-92. The tract at residues 122-159 (GRRVHVASGRTYHLKYNPPKTEGVDDETGEPLIQRDDD) is LID. Residues Arg-123 and 132 to 133 (TY) each bind ATP. The disordered stretch occupies residues 138-159 (NPPKTEGVDDETGEPLIQRDDD). AMP-binding residues include Arg-156 and Arg-167. Gly-207 is an ATP binding site.

The protein belongs to the adenylate kinase family. In terms of assembly, monomer.

It localises to the cytoplasm. The enzyme catalyses AMP + ATP = 2 ADP. It participates in purine metabolism; AMP biosynthesis via salvage pathway; AMP from ADP: step 1/1. Catalyzes the reversible transfer of the terminal phosphate group between ATP and AMP. Plays an important role in cellular energy homeostasis and in adenine nucleotide metabolism. This Cupriavidus taiwanensis (strain DSM 17343 / BCRC 17206 / CCUG 44338 / CIP 107171 / LMG 19424 / R1) (Ralstonia taiwanensis (strain LMG 19424)) protein is Adenylate kinase.